Consider the following 595-residue polypeptide: DNA-directed RNA polymerase III subunit RPC3 (595 aa).

The leucine-zipper stretch occupies residues 523–544 (LIYDMAEILNRIQDFKLEHKIL).

It belongs to the RNA polymerase beta chain family. As to quaternary structure, component of the RNA polymerase III (Pol III) complex consisting of 17 subunits.

It localises to the nucleus. DNA-dependent RNA polymerase catalyzes the transcription of DNA into RNA using the four ribonucleoside triphosphates as substrates. Specific core component of RNA polymerase III which synthesizes small RNAs, such as 5S rRNA and tRNAs. This Candida albicans (strain SC5314 / ATCC MYA-2876) (Yeast) protein is DNA-directed RNA polymerase III subunit RPC3 (RPC82).